Reading from the N-terminus, the 192-residue chain is Ion-translocating oxidoreductase complex subunit A (192 aa).

6 consecutive transmembrane segments (helical) span residues 5-25 (LLLL…FLGL), 39-59 (IGMS…SYLV), 65-85 (LPFD…AVVV), 102-122 (ALGI…VALL), 134-154 (AIYG…FSAM), and 171-191 (AIAM…TGLV).

Belongs to the NqrDE/RnfAE family. As to quaternary structure, the complex is composed of six subunits: RnfA, RnfB, RnfC, RnfD, RnfE and RnfG.

It is found in the cell inner membrane. Functionally, part of a membrane-bound complex that couples electron transfer with translocation of ions across the membrane. The polypeptide is Ion-translocating oxidoreductase complex subunit A (Shewanella putrefaciens (strain CN-32 / ATCC BAA-453)).